Consider the following 257-residue polypeptide: MAALQNPVALQSRTTTAVAALSTSSTTSTPKPFSLSFSSSTATFNPLRLKILTASKLTAKPRGGALGTRMVDSTASRYASALADVADVTGTLEATNSDVEKLIRIFSEEPVYYFFANPVISIDNKRSVLDEIITTSGLQPHTANFINILIDSERINLVKEILNEFEDVFNKITGTEVAVVTSVVKLENDHLAQIAKGVQKITGAKNVRIKTVIDPSLVAGFTIRYGNEGSKLVDMSVKKQLEEIAAQLEMDDVTLAV.

Residues 1 to 70 (MAALQNPVAL…PRGGALGTRM (70 aa)) constitute a chloroplast transit peptide.

The protein belongs to the ATPase delta chain family. As to quaternary structure, F-type ATPases have 2 components, CF(1) - the catalytic core - and CF(0) - the membrane proton channel. CF(1) has five subunits: alpha(3), beta(3), gamma(1), delta(1), epsilon(1). CF(0) has three main subunits: a, b and c.

It localises to the plastid. Its subcellular location is the chloroplast thylakoid membrane. Its function is as follows. This protein seems to be part of the stalk that links CF(0) to CF(1). It either transmits conformational changes from CF(0) into CF(1) or is implicated in proton conduction. This is ATP synthase delta chain, chloroplastic (ATPD) from Spinacia oleracea (Spinach).